The primary structure comprises 178 residues: Protein RICE FLOWERING LOCUS T 1 (178 aa).

The protein belongs to the phosphatidylethanolamine-binding protein family. As to quaternary structure, interacts with FTIP1. In terms of tissue distribution, expressed in leaf vascular tissues. Specifically expressed in the phloem including companion cells.

The protein localises to the cytoplasm. It is found in the nucleus. It localises to the endoplasmic reticulum. Its function is as follows. Probable mobile flower-promoting signal (florigen) that moves from the leaf to the shoot apical meristem (SAM) and induces flowering. Promotes the transition from vegetative growth to flowering under long day (LD) conditions. Acts upstream of MADS14 and MADS15. May also participate in the promotion of flowering under short day (SD) conditions. This chain is Protein RICE FLOWERING LOCUS T 1, found in Oryza sativa subsp. japonica (Rice).